We begin with the raw amino-acid sequence, 137 residues long: Putative pre-16S rRNA nuclease (137 aa).

It belongs to the YqgF nuclease family.

It localises to the cytoplasm. In terms of biological role, could be a nuclease involved in processing of the 5'-end of pre-16S rRNA. The sequence is that of Putative pre-16S rRNA nuclease from Bacillus cereus (strain AH187).